Consider the following 175-residue polypeptide: Ribulose bisphosphate carboxylase small subunit, chloroplastic 2 (175 aa).

The N-terminal 46 residues, 1–46 (MAPAVMASSATTVAPFQGLKSTAGLPISCRSGSTGLSSVSNGGRIR), are a transit peptide targeting the chloroplast.

It belongs to the RuBisCO small chain family. In terms of assembly, heterohexadecamer of 8 large and 8 small subunits.

Its subcellular location is the plastid. The protein resides in the chloroplast. Functionally, ruBisCO catalyzes two reactions: the carboxylation of D-ribulose 1,5-bisphosphate, the primary event in carbon dioxide fixation, as well as the oxidative fragmentation of the pentose substrate. Both reactions occur simultaneously and in competition at the same active site. Although the small subunit is not catalytic it is essential for maximal activity. The polypeptide is Ribulose bisphosphate carboxylase small subunit, chloroplastic 2 (Triticum aestivum (Wheat)).